The chain runs to 221 residues: Cytidylate kinase (221 aa).

An ATP-binding site is contributed by Gly-11–Thr-19.

Belongs to the cytidylate kinase family. Type 1 subfamily.

Its subcellular location is the cytoplasm. The catalysed reaction is CMP + ATP = CDP + ADP. It catalyses the reaction dCMP + ATP = dCDP + ADP. The sequence is that of Cytidylate kinase from Mycoplasmopsis pulmonis (strain UAB CTIP) (Mycoplasma pulmonis).